A 337-amino-acid polypeptide reads, in one-letter code: Putative NAC domain-containing protein 94 (337 aa).

The region spanning 20 to 191 (VLPGFRFHPT…AWAICRIFKK (172 aa)) is the NAC domain.

It is found in the nucleus. This is Putative NAC domain-containing protein 94 (ANAC094) from Arabidopsis thaliana (Mouse-ear cress).